We begin with the raw amino-acid sequence, 1342 residues long: DNA-directed RNA polymerase subunit beta (1342 aa).

N6-acetyllysine occurs at positions 1022 and 1200.

The protein belongs to the RNA polymerase beta chain family. As to quaternary structure, the RNAP catalytic core consists of 2 alpha, 1 beta, 1 beta' and 1 omega subunit. When a sigma factor is associated with the core the holoenzyme is formed, which can initiate transcription.

The enzyme catalyses RNA(n) + a ribonucleoside 5'-triphosphate = RNA(n+1) + diphosphate. In terms of biological role, DNA-dependent RNA polymerase catalyzes the transcription of DNA into RNA using the four ribonucleoside triphosphates as substrates. The chain is DNA-directed RNA polymerase subunit beta from Escherichia fergusonii (strain ATCC 35469 / DSM 13698 / CCUG 18766 / IAM 14443 / JCM 21226 / LMG 7866 / NBRC 102419 / NCTC 12128 / CDC 0568-73).